A 364-amino-acid polypeptide reads, in one-letter code: UDP-N-acetylglucosamine--N-acetylmuramyl-(pentapeptide) pyrophosphoryl-undecaprenol N-acetylglucosamine transferase (364 aa).

UDP-N-acetyl-alpha-D-glucosamine is bound by residues 10–12 (TGG), Asn-128, Arg-170, Ser-199, Ile-250, and Gln-295.

It belongs to the glycosyltransferase 28 family. MurG subfamily.

It is found in the cell inner membrane. The enzyme catalyses di-trans,octa-cis-undecaprenyl diphospho-N-acetyl-alpha-D-muramoyl-L-alanyl-D-glutamyl-meso-2,6-diaminopimeloyl-D-alanyl-D-alanine + UDP-N-acetyl-alpha-D-glucosamine = di-trans,octa-cis-undecaprenyl diphospho-[N-acetyl-alpha-D-glucosaminyl-(1-&gt;4)]-N-acetyl-alpha-D-muramoyl-L-alanyl-D-glutamyl-meso-2,6-diaminopimeloyl-D-alanyl-D-alanine + UDP + H(+). Its pathway is cell wall biogenesis; peptidoglycan biosynthesis. Its function is as follows. Cell wall formation. Catalyzes the transfer of a GlcNAc subunit on undecaprenyl-pyrophosphoryl-MurNAc-pentapeptide (lipid intermediate I) to form undecaprenyl-pyrophosphoryl-MurNAc-(pentapeptide)GlcNAc (lipid intermediate II). This is UDP-N-acetylglucosamine--N-acetylmuramyl-(pentapeptide) pyrophosphoryl-undecaprenol N-acetylglucosamine transferase from Chlorobium phaeobacteroides (strain DSM 266 / SMG 266 / 2430).